Consider the following 2276-residue polypeptide: Protein Ycf2 (2276 aa).

1621–1628 (GSIGTGRS) provides a ligand contact to ATP.

This sequence belongs to the Ycf2 family.

It is found in the plastid. The protein resides in the chloroplast stroma. Functionally, probable ATPase of unknown function. Its presence in a non-photosynthetic plant (Epifagus virginiana) and experiments in tobacco indicate that it has an essential function which is probably not related to photosynthesis. This chain is Protein Ycf2, found in Guizotia abyssinica (Niger).